A 420-amino-acid polypeptide reads, in one-letter code: uncharacterized protein (420 aa).

2 disordered regions span residues 84–103 and 122–211; these read RSQANSESTPPEHTWSGTSE and SMNN…NKKS. Positions 85–103 are enriched in polar residues; it reads SQANSESTPPEHTWSGTSE. The segment covering 184–199 has biased composition (basic and acidic residues); sequence SMTDQEVEQRRKEANK. 2 coiled-coil regions span residues 265 to 310 and 345 to 374; these read TEKE…TATN and LQFKIKKFERREKLLEEVENQIKQYFNFKE. Residues 399–408 show a composition bias toward polar residues; the sequence is KTSSPKTSIA. Positions 399-420 are disordered; sequence KTSSPKTSIAGSHRRSTRSSEN. Basic residues predominate over residues 410-420; that stretch reads SHRRSTRSSEN.

This is an uncharacterized protein from Caenorhabditis elegans.